Consider the following 167-residue polypeptide: Crossover junction endodeoxyribonuclease RuvC (167 aa).

Residues Asp7, Glu67, and Asp140 contribute to the active site. Mg(2+)-binding residues include Asp7, Glu67, and Asp140.

The protein belongs to the RuvC family. In terms of assembly, homodimer which binds Holliday junction (HJ) DNA. The HJ becomes 2-fold symmetrical on binding to RuvC with unstacked arms; it has a different conformation from HJ DNA in complex with RuvA. In the full resolvosome a probable DNA-RuvA(4)-RuvB(12)-RuvC(2) complex forms which resolves the HJ. Mg(2+) serves as cofactor.

It localises to the cytoplasm. It catalyses the reaction Endonucleolytic cleavage at a junction such as a reciprocal single-stranded crossover between two homologous DNA duplexes (Holliday junction).. Its function is as follows. The RuvA-RuvB-RuvC complex processes Holliday junction (HJ) DNA during genetic recombination and DNA repair. Endonuclease that resolves HJ intermediates. Cleaves cruciform DNA by making single-stranded nicks across the HJ at symmetrical positions within the homologous arms, yielding a 5'-phosphate and a 3'-hydroxyl group; requires a central core of homology in the junction. The consensus cleavage sequence is 5'-(A/T)TT(C/G)-3'. Cleavage occurs on the 3'-side of the TT dinucleotide at the point of strand exchange. HJ branch migration catalyzed by RuvA-RuvB allows RuvC to scan DNA until it finds its consensus sequence, where it cleaves and resolves the cruciform DNA. This Dehalococcoides mccartyi (strain ATCC BAA-2100 / JCM 16839 / KCTC 5957 / BAV1) protein is Crossover junction endodeoxyribonuclease RuvC.